Consider the following 378-residue polypeptide: MDSTTHGPRTHVPGRLFIGLMSGTSMDGADGVLVRLDGPRPEVLASASLPMPAALRDELFALNHAGANELERAALAANGLARLYARAVRQLLDQAGLQPGDVAAIGAHGQTVRHRPDLGYTLQLNAPALLAELAGIDVVADFRSRDVAAGGQGAPLVPPFHAALFAGGQARAVLNLGGIANVTLLEPGRPPRGFDTGPANVLLDAWCQRHTGQPYDADGRFAAQGQVLADLLEHLIASEPWFALAPPKSTGRDLFNLDWLLARLQAFDGPAPQPQDVQATLQRLTARTVANAIDASAAAPRDVLVCGGGARNPGLMRELAYCLQRPVRPTDDAGVPAQWVEALAFAWLAQACLDRIPAGLPTVTGARAARVLGALYPA.

23-30 contacts ATP; sequence GTSMDGAD.

The protein belongs to the anhydro-N-acetylmuramic acid kinase family.

The catalysed reaction is 1,6-anhydro-N-acetyl-beta-muramate + ATP + H2O = N-acetyl-D-muramate 6-phosphate + ADP + H(+). The protein operates within amino-sugar metabolism; 1,6-anhydro-N-acetylmuramate degradation. It functions in the pathway cell wall biogenesis; peptidoglycan recycling. Functionally, catalyzes the specific phosphorylation of 1,6-anhydro-N-acetylmuramic acid (anhMurNAc) with the simultaneous cleavage of the 1,6-anhydro ring, generating MurNAc-6-P. Is required for the utilization of anhMurNAc either imported from the medium or derived from its own cell wall murein, and thus plays a role in cell wall recycling. This Bordetella pertussis (strain Tohama I / ATCC BAA-589 / NCTC 13251) protein is Anhydro-N-acetylmuramic acid kinase.